Here is a 78-residue protein sequence, read N- to C-terminus: MSRVCQVTGKGPVTGNNISHAHNKTRRRFLPNLQHHRFWVESEKRFVRLRVSAKGMRIIDKRGIEAVLADLRARGEKF.

It belongs to the bacterial ribosomal protein bL28 family.

The protein is Large ribosomal subunit protein bL28 of Pseudomonas aeruginosa (strain LESB58).